We begin with the raw amino-acid sequence, 426 residues long: Glutamate-1-semialdehyde 2,1-aminomutase (426 aa).

Residue K265 is modified to N6-(pyridoxal phosphate)lysine.

This sequence belongs to the class-III pyridoxal-phosphate-dependent aminotransferase family. HemL subfamily. As to quaternary structure, homodimer. The cofactor is pyridoxal 5'-phosphate.

The protein localises to the cytoplasm. It catalyses the reaction (S)-4-amino-5-oxopentanoate = 5-aminolevulinate. Its pathway is porphyrin-containing compound metabolism; protoporphyrin-IX biosynthesis; 5-aminolevulinate from L-glutamyl-tRNA(Glu): step 2/2. This is Glutamate-1-semialdehyde 2,1-aminomutase from Actinobacillus pleuropneumoniae serotype 5b (strain L20).